Here is a 462-residue protein sequence, read N- to C-terminus: Phosphoglucosamine mutase (462 aa).

The active-site Phosphoserine intermediate is the Ser-112. Ser-112, Asp-250, Asp-252, and Asp-254 together coordinate Mg(2+). Position 112 is a phosphoserine (Ser-112).

It belongs to the phosphohexose mutase family. It depends on Mg(2+) as a cofactor. In terms of processing, activated by phosphorylation.

The catalysed reaction is alpha-D-glucosamine 1-phosphate = D-glucosamine 6-phosphate. Catalyzes the conversion of glucosamine-6-phosphate to glucosamine-1-phosphate. The polypeptide is Phosphoglucosamine mutase (Parasynechococcus marenigrum (strain WH8102)).